Reading from the N-terminus, the 190-residue chain is Peptidyl-tRNA hydrolase (190 aa).

A tRNA-binding site is contributed by Tyr-18. Catalysis depends on His-23, which acts as the Proton acceptor. The tRNA site is built by Phe-69, Asn-71, and Asn-117.

The protein belongs to the PTH family. In terms of assembly, monomer.

The protein localises to the cytoplasm. The enzyme catalyses an N-acyl-L-alpha-aminoacyl-tRNA + H2O = an N-acyl-L-amino acid + a tRNA + H(+). Hydrolyzes ribosome-free peptidyl-tRNAs (with 1 or more amino acids incorporated), which drop off the ribosome during protein synthesis, or as a result of ribosome stalling. Functionally, catalyzes the release of premature peptidyl moieties from peptidyl-tRNA molecules trapped in stalled 50S ribosomal subunits, and thus maintains levels of free tRNAs and 50S ribosomes. This chain is Peptidyl-tRNA hydrolase, found in Rhodococcus jostii (strain RHA1).